The chain runs to 259 residues: Ribosome maturation factor RimP (259 aa).

The tract at residues 198-259 is disordered; the sequence is SLGLAPEPPP…RGEIDTSEGD (62 aa). Over residues 243–253 the composition is skewed to basic and acidic residues; that stretch reads LAADKARRGEI.

Belongs to the RimP family.

The protein resides in the cytoplasm. In terms of biological role, required for maturation of 30S ribosomal subunits. This is Ribosome maturation factor RimP from Rhodopseudomonas palustris (strain TIE-1).